The chain runs to 596 residues: (E)-beta-ocimene synthase, chloroplastic (596 aa).

The transit peptide at 1-35 (MAITHYQMASFQSSFHFCMLRKTLRQKSSLHFAKR) directs the protein to the chloroplast. Positions 307, 344, 348, 485, and 488 each coordinate (2E)-geranyl diphosphate. Mg(2+)-binding residues include D344 and D348. A DDXXD motif motif is present at residues 344–348 (DDIYD). N488, A492, and E496 together coordinate Mg(2+).

The protein belongs to the terpene synthase family. Tpsb subfamily. Mg(2+) is required as a cofactor. Mn(2+) serves as cofactor. In terms of tissue distribution, highly expressed in leaves, stems and disk florets. Detected in roots.

It localises to the plastid. The protein localises to the chloroplast. The catalysed reaction is (2E)-geranyl diphosphate = (E)-beta-ocimene + diphosphate. The protein operates within secondary metabolite biosynthesis; terpenoid biosynthesis. Functionally, monoterpene synthase involved in the biosynthesis of (E)-beta-ocimene as the major product and trace amounts of (Z)-beta-ocimene. Can only accept geranyl diphosphate as substrate. This Matricaria chamomilla var. recutita (German chamomile) protein is (E)-beta-ocimene synthase, chloroplastic.